The sequence spans 500 residues: Cytochrome P450 6B4 (500 aa).

Residue Cys-443 participates in heme binding.

It belongs to the cytochrome P450 family. The cofactor is heme.

Its subcellular location is the endoplasmic reticulum membrane. It is found in the microsome membrane. It carries out the reaction an organic molecule + reduced [NADPH--hemoprotein reductase] + O2 = an alcohol + oxidized [NADPH--hemoprotein reductase] + H2O + H(+). Enables the insect to feed on furanocoumarin-producing plants and evolved as an adaptation for detoxification of xanthotoxin and other furanocoumarins. This isozyme metabolizes isopimpinellin, imperatorin, and bergapten at high rates, xanthotoxin and psoralen at intermediate rates and angelicin, sphondin, and trioxsalen only at very low rates. This chain is Cytochrome P450 6B4 (CYP6B4), found in Papilio glaucus (Eastern tiger swallowtail butterfly).